The primary structure comprises 166 residues: Bile acid 7alpha-dehydratase (166 aa).

As to quaternary structure, homodimer.

The catalysed reaction is 7alpha,12alpha-dihydroxy-3-oxochol-4-en-24-oyl-CoA = 12alpha-hydroxy-3-oxochola-4,6-dien-24-oyl-CoA + H2O. It catalyses the reaction 7alpha-hydroxy-3-oxochol-4-en-24-oyl-CoA = 3-oxochol-4,6-dien-24-oyl-CoA + H2O. It carries out the reaction 7alpha,12alpha-dihydroxy-3-oxochol-4-en-24-oate = 12alpha-hydroxy-3-oxochola-4,6-dien-24-oate + H2O. The enzyme catalyses 7alpha-hydroxy-3-oxochol-4-en-24-oate = 3-oxochola-4,6-dien-24-oate + H2O. It functions in the pathway lipid metabolism; bile acid biosynthesis. In terms of biological role, functions in the bile acid 7alpha-dehydroxylation pathway, which forms secondary bile acids via the 7alpha-dehydroxylation of primary bile acids, and is carried out by intestinal anaerobic bacteria. Catalyzes the dehydration step in this pathway, yielding a 3-oxo-Delta(4,6)-bile acid-CoA intermediate. In vitro, can act on the free bile acids (non CoA-conjugated) 7-alpha,12-alpha-dihydroxy-3-oxochol-4-enoate and 7-alpha-hydroxy-3-oxochol-4-enoate, but not on 7-alpha,12-alpha-dihydroxy-3-oxo-5-beta-cholanate, 3-alpha,7-alpha,12-alpha-trihydroxy-5-beta-cholanate or 7-beta-hydroxy-3-oxochol-4-enoate. The protein is Bile acid 7alpha-dehydratase of Clostridium scindens (strain JCM 10418 / VPI 12708).